A 229-amino-acid chain; its full sequence is Cytidylate kinase (229 aa).

Residue 12–20 participates in ATP binding; sequence GPSGSGKGT.

The protein belongs to the cytidylate kinase family. Type 1 subfamily.

It is found in the cytoplasm. The enzyme catalyses CMP + ATP = CDP + ADP. It carries out the reaction dCMP + ATP = dCDP + ADP. The protein is Cytidylate kinase of Pseudomonas fluorescens (strain SBW25).